Consider the following 279-residue polypeptide: Thymidylate synthase (279 aa).

133 to 134 (RR) lines the dUMP pocket. The active-site Nucleophile is the Cys-154. Residues 178–181 (RSND), Asn-189, and 219–221 (HIY) each bind dUMP. Asp-181 contacts (6R)-5,10-methylene-5,6,7,8-tetrahydrofolate. Residue Ala-278 coordinates (6R)-5,10-methylene-5,6,7,8-tetrahydrofolate.

It belongs to the thymidylate synthase family. Bacterial-type ThyA subfamily. As to quaternary structure, homodimer.

It is found in the cytoplasm. The catalysed reaction is dUMP + (6R)-5,10-methylene-5,6,7,8-tetrahydrofolate = 7,8-dihydrofolate + dTMP. Its pathway is pyrimidine metabolism; dTTP biosynthesis. In terms of biological role, catalyzes the reductive methylation of 2'-deoxyuridine-5'-monophosphate (dUMP) to 2'-deoxythymidine-5'-monophosphate (dTMP) while utilizing 5,10-methylenetetrahydrofolate (mTHF) as the methyl donor and reductant in the reaction, yielding dihydrofolate (DHF) as a by-product. This enzymatic reaction provides an intracellular de novo source of dTMP, an essential precursor for DNA biosynthesis. This is Thymidylate synthase from Streptococcus suis (strain 05ZYH33).